The sequence spans 437 residues: GTPase Der (437 aa).

EngA-type G domains follow at residues 3–167 (ALVA…PAEN) and 177–353 (PRIA…AHRS). GTP is bound by residues 9–16 (GRPNVGKS), 56–60 (DTGGW), 119–122 (NKVD), 183–190 (GRPNAGKS), 230–234 (DTAGI), and 295–298 (NKWD). The KH-like domain maps to 354 to 437 (TRIPTHKLNE…TPINIFIREK (84 aa)).

This sequence belongs to the TRAFAC class TrmE-Era-EngA-EngB-Septin-like GTPase superfamily. EngA (Der) GTPase family. In terms of assembly, associates with the 50S ribosomal subunit.

In terms of biological role, GTPase that plays an essential role in the late steps of ribosome biogenesis. This chain is GTPase Der, found in Porphyromonas gingivalis (strain ATCC BAA-308 / W83).